The primary structure comprises 312 residues: Elongation factor Ts (312 aa).

An involved in Mg(2+) ion dislocation from EF-Tu region spans residues 84–87; sequence TDFV.

It belongs to the EF-Ts family.

It localises to the cytoplasm. Associates with the EF-Tu.GDP complex and induces the exchange of GDP to GTP. It remains bound to the aminoacyl-tRNA.EF-Tu.GTP complex up to the GTP hydrolysis stage on the ribosome. This chain is Elongation factor Ts, found in Caulobacter vibrioides (strain ATCC 19089 / CIP 103742 / CB 15) (Caulobacter crescentus).